We begin with the raw amino-acid sequence, 143 residues long: Large ribosomal subunit protein uL15 (143 aa).

The interval 1–47 is disordered; it reads MKLHELTPSEGSRFSRRRIGRGDSSGQGKTSGRGQKGQKARGKVRVG. Residues 23–35 show a composition bias toward gly residues; the sequence is DSSGQGKTSGRGQ.

The protein belongs to the universal ribosomal protein uL15 family. Part of the 50S ribosomal subunit.

Binds to the 23S rRNA. This is Large ribosomal subunit protein uL15 from Lactiplantibacillus plantarum (strain ATCC BAA-793 / NCIMB 8826 / WCFS1) (Lactobacillus plantarum).